Here is a 245-residue protein sequence, read N- to C-terminus: Uridylate kinase (245 aa).

16-19 (KLSG) contacts ATP. Gly58 provides a ligand contact to UMP. Gly59 and Arg63 together coordinate ATP. UMP contacts are provided by residues Asp78 and 139–146 (TGNPFFTT). 3 residues coordinate ATP: Thr166, Tyr172, and Asp175.

Belongs to the UMP kinase family. Homohexamer.

The protein resides in the cytoplasm. The enzyme catalyses UMP + ATP = UDP + ADP. The protein operates within pyrimidine metabolism; CTP biosynthesis via de novo pathway; UDP from UMP (UMPK route): step 1/1. With respect to regulation, inhibited by UTP. In terms of biological role, catalyzes the reversible phosphorylation of UMP to UDP. The polypeptide is Uridylate kinase (Idiomarina loihiensis (strain ATCC BAA-735 / DSM 15497 / L2-TR)).